The chain runs to 345 residues: Methylthioribose-1-phosphate isomerase (345 aa).

Substrate is bound by residues 44-46, Arg-86, and Gln-194; that span reads RGA. The active-site Proton donor is the Asp-235. 245 to 246 is a substrate binding site; sequence NK.

The protein belongs to the eIF-2B alpha/beta/delta subunits family. MtnA subfamily.

The enzyme catalyses 5-(methylsulfanyl)-alpha-D-ribose 1-phosphate = 5-(methylsulfanyl)-D-ribulose 1-phosphate. The protein operates within amino-acid biosynthesis; L-methionine biosynthesis via salvage pathway; L-methionine from S-methyl-5-thio-alpha-D-ribose 1-phosphate: step 1/6. In terms of biological role, catalyzes the interconversion of methylthioribose-1-phosphate (MTR-1-P) into methylthioribulose-1-phosphate (MTRu-1-P). The chain is Methylthioribose-1-phosphate isomerase from Desulfitobacterium hafniense (strain Y51).